The sequence spans 106 residues: ATP-dependent Clp protease adapter protein ClpS (106 aa).

It belongs to the ClpS family. Binds to the N-terminal domain of the chaperone ClpA.

Involved in the modulation of the specificity of the ClpAP-mediated ATP-dependent protein degradation. The protein is ATP-dependent Clp protease adapter protein ClpS of Yersinia enterocolitica serotype O:8 / biotype 1B (strain NCTC 13174 / 8081).